The chain runs to 137 residues: Large ribosomal subunit protein uL16 (137 aa).

This sequence belongs to the universal ribosomal protein uL16 family. In terms of assembly, part of the 50S ribosomal subunit.

Binds 23S rRNA and is also seen to make contacts with the A and possibly P site tRNAs. The polypeptide is Large ribosomal subunit protein uL16 (Dinoroseobacter shibae (strain DSM 16493 / NCIMB 14021 / DFL 12)).